The sequence spans 279 residues: uncharacterized protein (279 aa).

This sequence to M.tuberculosis Rv2569c.

This is an uncharacterized protein from Mycobacterium leprae (strain TN).